The following is a 452-amino-acid chain: Flavin-containing monooxygenase FMO GS-OX-like 4 (452 aa).

17-22 (GAGAAG) is a binding site for FAD. Position 217–222 (217–222 (GNSASA)) interacts with NADP(+).

Belongs to the FMO family. The cofactor is FAD.

Its function is as follows. Catalyzes the conversion of methylthioalkyl glucosinolates of any chain length into methylsulfinylalkyl glucosinolates. The protein is Flavin-containing monooxygenase FMO GS-OX-like 4 of Arabidopsis thaliana (Mouse-ear cress).